Consider the following 419-residue polypeptide: Haloacid dehalogenase-like hydrolase domain-containing 5 (419 aa).

The first 15 residues, 1–15 (MAALAGLGVLGAGRH), serve as a signal peptide directing secretion.

The protein belongs to the HAD-like hydrolase superfamily.

This Mus musculus (Mouse) protein is Haloacid dehalogenase-like hydrolase domain-containing 5.